The primary structure comprises 368 residues: Isopentenyl-diphosphate delta-isomerase (368 aa).

Position 7-8 (7-8 (RK)) interacts with substrate. FMN-binding positions include threonine 65, 66 to 68 (GMT), serine 96, and asparagine 125. 96-98 (SQR) contributes to the substrate binding site. Glutamine 160 provides a ligand contact to substrate. Glutamate 161 contacts Mg(2+). FMN is bound by residues lysine 193, serine 218, threonine 223, 275–277 (GIR), and 296–297 (AL).

The protein belongs to the IPP isomerase type 2 family. Homooctamer. Dimer of tetramers. It depends on FMN as a cofactor. NADPH serves as cofactor. Requires Mg(2+) as cofactor.

It localises to the cytoplasm. The enzyme catalyses isopentenyl diphosphate = dimethylallyl diphosphate. Functionally, involved in the biosynthesis of isoprenoids. Catalyzes the 1,3-allylic rearrangement of the homoallylic substrate isopentenyl (IPP) to its allylic isomer, dimethylallyl diphosphate (DMAPP). This is Isopentenyl-diphosphate delta-isomerase from Saccharolobus islandicus (strain L.S.2.15 / Lassen #1) (Sulfolobus islandicus).